We begin with the raw amino-acid sequence, 191 residues long: Reticulon-like protein B15 (191 aa).

Positions 13-191 (VADLCLWKDK…SKIPRAPKVE (179 aa)) constitute a Reticulon domain. 3 helical membrane passes run 23-43 (INSG…EFME), 47-67 (VPLL…WAKF), and 122-142 (VAII…YICL).

It is found in the endoplasmic reticulum membrane. This is Reticulon-like protein B15 (RTNLB15) from Arabidopsis thaliana (Mouse-ear cress).